Consider the following 589-residue polypeptide: MSVSVHETRKSRSSTGSMNISVFHKASHPDCVLAHLNTLRKHCMFTDVTLWAGDRAFPCHRAVLAASSRYFEAMFSHGLRESRDDTVNFQDNLHPEVLELLLDFAYSSRIVINEENAESLLEAGDMLQFHDVRDAAAEFLEKNLSPSNCLGMMVLSDAHQCRRLYEFSCRMSLVHFETVRQSEDFNSLSRDTLLDLISRDELETEDERVVFEAILQWVKHDLEQRKVHLPLLLRNVRLALLPSDCLKKAVSGEALLMADECTKLIIDEAFRCKTKILLNDGVVTSPFARPRKAGHTLLILGGQTFMCDKIYQVDHKAKEIIPKADLPSPRKEFSASAIGCKVYVTGGRGSENGVSKDVWVYDTVHEEWSKAAPMLIARFGHGSAELENCLYVVGGHTSLAGIFPASPSVSLKQVEKYDPGDNKWTMVAPMRDGVSNAAVVSAKLKLFVFGGTSIHRDMVSKVQCFDPSDNRWTIKAECPQPWRYTAAAVLGSQIFIMGGDTEYTAASAYRFDCETNQWTRIGDMTAKRMSCHAVASGNKLYVVGGYFGTQRCKTLDCYDPTSDTWNCITSVPYSLIPTAFVSTWKHLPA.

Positions 46–114 constitute a BTB domain; sequence TDVTLWAGDR…AYSSRIVINE (69 aa). The BACK domain maps to 149-250; that stretch reads CLGMMVLSDA…LPSDCLKKAV (102 aa). Kelch repeat units lie at residues 296–340, 341–388, 389–444, 446–492, 493–538, and 539–585; these read TLLI…AIGC, KVYV…ELEN, CLYV…SAKL, LFVF…VLGS, QIFI…ASGN, and KLYV…STWK.

In terms of assembly, component of the BCR(KLHL25) E3 ubiquitin ligase complex, at least composed of CUL3, KLHL25 and RBX1.

It participates in protein modification; protein ubiquitination. Substrate-specific adapter of a BCR (BTB-CUL3-RBX1) E3 ubiquitin ligase complex involved in various processes, such as translation homeostasis and lipid synthesis. The BCR(KLHL25) ubiquitin ligase complex acts by mediating ubiquitination of hypophosphorylated EIF4EBP1 (4E-BP1): ubiquitination and subsequent degradation of hypophosphorylated EIF4EBP1 (4E-BP1) probably serves as a homeostatic mechanism to maintain translation and prevent eIF4E inhibition when eIF4E levels are low. The BCR(KLHL25) complex does not target EIF4EBP1 (4E-BP1) when it is hyperphosphorylated or associated with eIF4E. The BCR(KLHL25) complex also acts as a regulator of lipid synthesis by mediating ubiquitination and degradation of ACLY, thereby inhibiting lipid synthesis. BCR(KLHL25)-mediated degradation of ACLY promotes fatty acid oxidation and is required for differentiation of inducible regulatory T (iTreg) cells. This is Kelch-like protein 25 from Rattus norvegicus (Rat).